An 87-amino-acid polypeptide reads, in one-letter code: Phosphoribosyl-ATP pyrophosphatase (87 aa).

Belongs to the PRA-PH family.

It localises to the cytoplasm. The catalysed reaction is 1-(5-phospho-beta-D-ribosyl)-ATP + H2O = 1-(5-phospho-beta-D-ribosyl)-5'-AMP + diphosphate + H(+). It participates in amino-acid biosynthesis; L-histidine biosynthesis; L-histidine from 5-phospho-alpha-D-ribose 1-diphosphate: step 2/9. The chain is Phosphoribosyl-ATP pyrophosphatase from Salinibacter ruber (strain DSM 13855 / M31).